We begin with the raw amino-acid sequence, 165 residues long: Transcription antitermination protein NusB (165 aa).

Residues 1-27 are disordered; the sequence is MISDDTDQFNPRDAKSPEIAKGKSAKR. Basic and acidic residues predominate over residues 10-21; that stretch reads NPRDAKSPEIAK.

This sequence belongs to the NusB family.

In terms of biological role, involved in transcription antitermination. Required for transcription of ribosomal RNA (rRNA) genes. Binds specifically to the boxA antiterminator sequence of the ribosomal RNA (rrn) operons. The polypeptide is Transcription antitermination protein NusB (Pseudomonas syringae pv. tomato (strain ATCC BAA-871 / DC3000)).